A 404-amino-acid polypeptide reads, in one-letter code: POU domain, class 2, transcription factor 3L (404 aa).

Disordered regions lie at residues 1–29 (MNRE…TLDF) and 44–67 (TGIP…MTGE). Residues 16–29 (GHLENDAERDTLDF) are compositionally biased toward basic and acidic residues. One can recognise a POU-specific domain in the interval 187 to 235 (QGDVGLAMGKLYGNDFSQTTISRFEALNLSFKNMCKLKPLLEKWLNDAE). A DNA-binding region (homeobox) is located at residues 259-297 (KRKKRTSIETNIRLTLEKRFQDNPKPSSEEISMIAEQLV). A disordered region spans residues 346-367 (MTVTSSCSPGNSSRPSSPTCGL). A compositionally biased stretch (low complexity) spans 350–363 (SSCSPGNSSRPSSP).

This sequence belongs to the POU transcription factor family. Class-2 subfamily.

The protein localises to the nucleus. In terms of biological role, transcription factor that binds to the octamer motif (5'-ATTTGCAT-3') and regulates cell type-specific differentiation pathways. The protein is POU domain, class 2, transcription factor 3L (pou2f3.L) of Xenopus laevis (African clawed frog).